The following is a 114-amino-acid chain: Cytochrome c2 (114 aa).

Gln-1 is subject to Pyrrolidone carboxylic acid. Heme c-binding residues include Cys-13, Cys-16, His-17, and Met-93.

Belongs to the cytochrome c family. Post-translationally, binds 1 heme c group covalently per subunit.

The protein localises to the periplasm. Its function is as follows. Cytochrome c2 is found mainly in purple, non-sulfur, photosynthetic bacteria where it functions as the electron donor to the oxidized bacteriochlorophyll in the photophosphorylation pathway. However, it may also have a role in the respiratory chain and is found in some non-photosynthetic bacteria. This chain is Cytochrome c2, found in Rhodopseudomonas palustris.